We begin with the raw amino-acid sequence, 133 residues long: Snaclec botrocetin subunit alpha (133 aa).

Disulfide bonds link C2-C13, C30-C128, and C103-C120. The region spanning 9 to 129 (YEGNCYKFFQ…CAQKNPFVCK (121 aa)) is the C-type lectin domain.

It belongs to the snaclec family. Heterodimer of subunits alpha and beta; disulfide-linked. Botrocetin and vWF form a soluble complex. Expressed by the venom gland.

Its subcellular location is the secreted. Snaclec that binds to von Willebrand factor (VWF) and induces its interaction with GPIbalpha (GP1BA) (via the vWF A1 domain), resulting in platelet aggregation. The polypeptide is Snaclec botrocetin subunit alpha (Bothrops jararaca (Jararaca)).